The sequence spans 306 residues: Leucine-rich repeat-containing protein 59 (306 aa).

The residue at position 1 (M1) is an N-acetylmethionine. Position 2 is an N-acetylthreonine; in Leucine-rich repeat-containing protein 59, N-terminally processed (T2). Topologically, residues 2–244 (TKAGSKGGNL…KPPPRKHTRS (243 aa)) are cytoplasmic. LRR repeat units lie at residues 10 to 31 (NLRD…NEVP), 40 to 62 (KATV…CGLT), 63 to 84 (HLVK…FGRL), 86 to 107 (NLQH…FAQL), and 109 to 128 (SLKW…AKVA). 2 positions are modified to phosphoserine: S23 and S25. K73 carries the post-translational modification N6-succinyllysine. K135 carries the N6-acetyllysine modification. The stretch at 152–216 (QADQERERQR…KAAKREQEKK (65 aa)) forms a coiled coil. Positions 175–221 (AKQRAKEAQERELRKREKAEEKERRRKEYDALKAAKREQEKKPKKET) are enriched in basic and acidic residues. The segment at 175-241 (AKQRAKEAQE…RPRKPPPRKH (67 aa)) is disordered. Residues 229–241 (SSSRPRKPPPRKH) are compositionally biased toward basic residues. The helical transmembrane segment at 245–265 (WAVLKLLLLLLLCVAGGLVAC) threads the bilayer. At 266–306 (RVTELQQQPLCTSVNTIYDNAVRGLRSHDILQWVLQTDSQQ) the chain is on the lumenal side.

Can form homodimers. Interacts with SGO1. Interacts with FGF1.

It is found in the microsome membrane. Its subcellular location is the endoplasmic reticulum membrane. The protein localises to the nucleus envelope. In terms of biological role, required for nuclear import of FGF1, but not that of FGF2. Might regulate nuclear import of exogenous FGF1 by facilitating interaction with the nuclear import machinery and by transporting cytosolic FGF1 to, and possibly through, the nuclear pores. In Bos taurus (Bovine), this protein is Leucine-rich repeat-containing protein 59 (LRRC59).